A 426-amino-acid chain; its full sequence is MRILVIGSGGREHAILKGLAADPATTDLHVAPGSPAFASLATVHADYKEVADPARMLELAQDIKPELVVIGPEIPLVAGVADTLRAEGIAVFGPNADAAQIEGSKAFAKEVMEAAGVATARAQTLPPGMTDDDIEHELDYFGPMYVVKDDGLAAGKGVVVTADRAEARQHIHLVHAAGNPVLLESFLDGPEVSLFCLVDGETVVPLLPAQDHKRAYDNDEGPNTGGMGAYTPLPWLSAEGVDRIVREVCEPVAKQMVERGTPYSGLLYAGLAWGQEGPSVIEFNCRFGDPETQPLLSLLKTPLAGVLNAVATGTLDELPALEWEDAYAVTVVLAAANYPESPRKGDAITSPDLADTDKILHAGTAVKDAEVISNGGRVLNVIGKGETLSAARAAAYEVLENIELADSFYRTDIGQAAEEGRISIDS.

The 204-residue stretch at 109–312 (KEVMEAAGVA…LAGVLNAVAT (204 aa)) folds into the ATP-grasp domain. ATP is bound at residue 138–193 (LDYFGPMYVVKDDGLAAGKGVVVTADRAEARQHIHLVHAAGNPVLLESFLDGPEVS). Mg(2+) contacts are provided by glutamate 282 and asparagine 284.

Belongs to the GARS family. Mg(2+) serves as cofactor. It depends on Mn(2+) as a cofactor.

It carries out the reaction 5-phospho-beta-D-ribosylamine + glycine + ATP = N(1)-(5-phospho-beta-D-ribosyl)glycinamide + ADP + phosphate + H(+). Its pathway is purine metabolism; IMP biosynthesis via de novo pathway; N(1)-(5-phospho-D-ribosyl)glycinamide from 5-phospho-alpha-D-ribose 1-diphosphate: step 2/2. The polypeptide is Phosphoribosylamine--glycine ligase (Corynebacterium ammoniagenes (Brevibacterium ammoniagenes)).